We begin with the raw amino-acid sequence, 181 residues long: UPF0228 protein MA_3117 (181 aa).

This sequence belongs to the UPF0228 family.

This chain is UPF0228 protein MA_3117, found in Methanosarcina acetivorans (strain ATCC 35395 / DSM 2834 / JCM 12185 / C2A).